Consider the following 979-residue polypeptide: Translation initiation factor IF-2 (979 aa).

Positions 68–392 (VKQKQGTPAS…SRAAQDAMEL (325 aa)) are disordered. 3 stretches are compositionally biased toward basic and acidic residues: residues 102–179 (QDMR…KPEE), 217–229 (EMEK…EVFR), and 260–273 (TKED…DADG). A compositionally biased stretch (polar residues) spans 309 to 326 (PSGNKNNNRPAQQQSNAS). Positions 347 to 356 (DVQRQVKETL) are enriched in basic and acidic residues. Positions 478–646 (ARPPIVTVMG…KVLLEADILE (169 aa)) constitute a tr-type G domain. Residues 487-494 (GHVDHGKT) are G1. 487-494 (GHVDHGKT) contacts GTP. The G2 stretch occupies residues 512-516 (GITQH). A G3 region spans residues 534 to 537 (DTPG). Residues 534–538 (DTPGH) and 588–591 (NKID) contribute to the GTP site. Positions 588–591 (NKID) are G4. The tract at residues 624–626 (SAK) is G5.

The protein belongs to the TRAFAC class translation factor GTPase superfamily. Classic translation factor GTPase family. IF-2 subfamily.

It is found in the cytoplasm. In terms of biological role, one of the essential components for the initiation of protein synthesis. Protects formylmethionyl-tRNA from spontaneous hydrolysis and promotes its binding to the 30S ribosomal subunits. Also involved in the hydrolysis of GTP during the formation of the 70S ribosomal complex. The protein is Translation initiation factor IF-2 of Porphyromonas gingivalis (strain ATCC 33277 / DSM 20709 / CIP 103683 / JCM 12257 / NCTC 11834 / 2561).